The sequence spans 365 residues: Chorismate synthase (365 aa).

NADP(+) is bound at residue R47. FMN is bound by residues 124 to 126, G287, 302 to 306, and R328; these read RAS and KPTAT.

It belongs to the chorismate synthase family. As to quaternary structure, homotetramer. Requires FMNH2 as cofactor.

The enzyme catalyses 5-O-(1-carboxyvinyl)-3-phosphoshikimate = chorismate + phosphate. Its pathway is metabolic intermediate biosynthesis; chorismate biosynthesis; chorismate from D-erythrose 4-phosphate and phosphoenolpyruvate: step 7/7. In terms of biological role, catalyzes the anti-1,4-elimination of the C-3 phosphate and the C-6 proR hydrogen from 5-enolpyruvylshikimate-3-phosphate (EPSP) to yield chorismate, which is the branch point compound that serves as the starting substrate for the three terminal pathways of aromatic amino acid biosynthesis. This reaction introduces a second double bond into the aromatic ring system. This is Chorismate synthase from Prochlorococcus marinus (strain MIT 9215).